A 101-amino-acid chain; its full sequence is SLIAERQRVMAAQVALRRQQAQEEELGISHPIPLPSATELFVKKENSGGSSCLLLESSSPTHSTSTVTTVSTSPSEGRMLIQDVPSITSRGHLESTSDLVV.

The segment at residues 1–13 (SLIAERQRVMAAQ) is a DNA-binding region (DM). Low complexity predominate over residues 52-75 (CLLLESSSPTHSTSTVTTVSTSPS). The tract at residues 52 to 79 (CLLLESSSPTHSTSTVTTVSTSPSEGRM) is disordered.

The protein belongs to the DMRT family.

The protein localises to the nucleus. Its function is as follows. May be required for testis development. This Alligator mississippiensis (American alligator) protein is Doublesex- and mab-3-related transcription factor 1 (DMRT1).